We begin with the raw amino-acid sequence, 365 residues long: tRNA/tmRNA (uracil-C(5))-methyltransferase (365 aa).

S-adenosyl-L-methionine is bound by residues Q189, Y217, N222, E238, and D298. Catalysis depends on C323, which acts as the Nucleophile. E357 acts as the Proton acceptor in catalysis.

This sequence belongs to the class I-like SAM-binding methyltransferase superfamily. RNA M5U methyltransferase family. TrmA subfamily.

It catalyses the reaction uridine(54) in tRNA + S-adenosyl-L-methionine = 5-methyluridine(54) in tRNA + S-adenosyl-L-homocysteine + H(+). The enzyme catalyses uridine(341) in tmRNA + S-adenosyl-L-methionine = 5-methyluridine(341) in tmRNA + S-adenosyl-L-homocysteine + H(+). Dual-specificity methyltransferase that catalyzes the formation of 5-methyluridine at position 54 (m5U54) in all tRNAs, and that of position 341 (m5U341) in tmRNA (transfer-mRNA). The sequence is that of tRNA/tmRNA (uracil-C(5))-methyltransferase from Shewanella woodyi (strain ATCC 51908 / MS32).